The following is a 318-amino-acid chain: RNA polymerase II transcription factor B subunit 3 (318 aa).

The RING-type zinc-finger motif lies at 13-54 (CPLCQADRYLNPNMKLLINPECYHKMCESCVDRIFTTGPAQC).

In terms of assembly, one of the nine subunits forming the core-TFIIH basal transcription factor. Also interacts with skp1 and with the mcs2-mcs6 complex.

The protein resides in the cytoplasm. The protein localises to the nucleus. Functionally, acts as a component of the general transcription and DNA repair factor IIH (TFIIH or factor B), which is essential for both basal and activated transcription, and is involved in nucleotide excision repair (NER) of damaged DNA. TFIIH has CTD kinase activity and DNA-dependent ATPase activity, and is essential for polymerase II transcription. The protein is RNA polymerase II transcription factor B subunit 3 (pmh1) of Schizosaccharomyces pombe (strain 972 / ATCC 24843) (Fission yeast).